The sequence spans 355 residues: Uroporphyrinogen decarboxylase (355 aa).

Residues arginine 36–arginine 40, aspartate 85, tyrosine 160, serine 215, and histidine 334 contribute to the substrate site.

The protein belongs to the uroporphyrinogen decarboxylase family. In terms of assembly, homodimer.

It is found in the cytoplasm. It catalyses the reaction uroporphyrinogen III + 4 H(+) = coproporphyrinogen III + 4 CO2. The protein operates within porphyrin-containing compound metabolism; protoporphyrin-IX biosynthesis; coproporphyrinogen-III from 5-aminolevulinate: step 4/4. Functionally, catalyzes the decarboxylation of four acetate groups of uroporphyrinogen-III to yield coproporphyrinogen-III. The sequence is that of Uroporphyrinogen decarboxylase from Rhodococcus jostii (strain RHA1).